The sequence spans 213 residues: MPRLLRLSLLWLGLLLVRFSRELSDISSARKLCGRYLVKEIEKLCGHANWSQFRFEEETPFSRLIAQASEKVEAYSPYQFESPQTASPARGRGTNPVSTSWEEAVNSWEMQSLPEYKDKKGYSPLGKTREFSSSHNINVYIHENAKFQKKRRNKIKTLSNLFWGHHPQRKRRGYSEKCCLTGCTKEELSIACLPYIDFKRLKEKRSSLVTKIY.

A signal peptide spans 1–20 (MPRLLRLSLLWLGLLLVRFS). Disulfide bonds link cysteine 33–cysteine 179, cysteine 45–cysteine 192, and cysteine 178–cysteine 183. Positions 55-168 (FEEETPFSRL…SNLFWGHHPQ (114 aa)) are cleaved as a propeptide — connecting peptide. Residues 201-213 (LKEKRSSLVTKIY) constitute a propeptide that is removed on maturation.

The protein belongs to the insulin family. In terms of tissue distribution, testis specific.

It is found in the secreted. In terms of biological role, may have a role in sperm development and fertilization. In Homo sapiens (Human), this protein is Insulin-like peptide INSL6 (INSL6).